The sequence spans 211 residues: Probable nicotinate-nucleotide adenylyltransferase (211 aa).

It belongs to the NadD family.

It catalyses the reaction nicotinate beta-D-ribonucleotide + ATP + H(+) = deamido-NAD(+) + diphosphate. Its pathway is cofactor biosynthesis; NAD(+) biosynthesis; deamido-NAD(+) from nicotinate D-ribonucleotide: step 1/1. Functionally, catalyzes the reversible adenylation of nicotinate mononucleotide (NaMN) to nicotinic acid adenine dinucleotide (NaAD). In Wigglesworthia glossinidia brevipalpis, this protein is Probable nicotinate-nucleotide adenylyltransferase.